We begin with the raw amino-acid sequence, 580 residues long: Sensor histidine kinase YvrG (580 aa).

Residues 1–6 (MRLRWK) lie on the Cytoplasmic side of the membrane. The helical transmembrane segment at 7–27 (FLFHFFGQMLIVILLLTVMLV) threads the bilayer. The Extracellular segment spans residues 28–261 (ASFFYLDARF…KSFLKVVLKA (234 aa)). A helical membrane pass occupies residues 262 to 282 (MFLVMAVLFMYIIWMTVWYMF). Topologically, residues 283–580 (RFGLPIFHTI…TVITILFKKQ (298 aa)) are cytoplasmic. A Histidine kinase domain is found at 363-580 (GLSHDLKTPL…TVITILFKKQ (218 aa)). At His-366 the chain carries Phosphohistidine; by autocatalysis.

Its subcellular location is the cell membrane. The enzyme catalyses ATP + protein L-histidine = ADP + protein N-phospho-L-histidine.. In terms of biological role, member of the two-component regulatory system YvrG/YvrH that positively regulates 7 transcriptional units (wprA, wapA-yxxG, dltABCDE, sunA, sunT-bdbA-yolJ-bdbB, sigO-rsoA, and sigX-rsiX), and negatively regulates the lytABC operon. Probably activates YvrH by phosphorylation. The protein is Sensor histidine kinase YvrG (yvrG) of Bacillus subtilis (strain 168).